A 132-amino-acid polypeptide reads, in one-letter code: Large ribosomal subunit protein uL14 (132 aa).

This sequence belongs to the universal ribosomal protein uL14 family. Part of the 50S ribosomal subunit. Forms a cluster with proteins L3 and L24e, part of which may contact the 16S rRNA in 2 intersubunit bridges.

Binds to 23S rRNA. Forms part of two intersubunit bridges in the 70S ribosome. The sequence is that of Large ribosomal subunit protein uL14 from Halorubrum lacusprofundi (strain ATCC 49239 / DSM 5036 / JCM 8891 / ACAM 34).